Consider the following 235-residue polypeptide: uncharacterized protein (235 aa).

Residues 2–69 (CRLAKIISNA…KPRLWIYYKP (68 aa)) form the S4 RNA-binding domain. D102 acts as the Nucleophile in catalysis.

This sequence belongs to the pseudouridine synthase RsuA family.

The catalysed reaction is a uridine in RNA = a pseudouridine in RNA. This is an uncharacterized protein from Rickettsia prowazekii (strain Madrid E).